The following is a 147-amino-acid chain: Large ribosomal subunit protein uL15 (147 aa).

The interval M1–G65 is disordered. 2 stretches are compositionally biased toward gly residues: residues Q21 to A31 and S42 to G52.

The protein belongs to the universal ribosomal protein uL15 family. Part of the 50S ribosomal subunit.

Its function is as follows. Binds to the 23S rRNA. The protein is Large ribosomal subunit protein uL15 of Heliobacterium modesticaldum (strain ATCC 51547 / Ice1).